We begin with the raw amino-acid sequence, 354 residues long: Glutamine synthetase (354 aa).

The GS beta-grasp domain occupies 22–101 (VQAEYVWIDG…VLAETFNNDG (80 aa)). The GS catalytic domain occupies 108–354 (HRHHTKKVMD…IIVETTVLDK (247 aa)).

The protein belongs to the glutamine synthetase family. In terms of assembly, homooctamer.

It localises to the cytoplasm. It carries out the reaction L-glutamate + NH4(+) + ATP = L-glutamine + ADP + phosphate + H(+). The protein is Glutamine synthetase (GLNA) of Suillus bovinus (Jersey cow bolete).